We begin with the raw amino-acid sequence, 155 residues long: MPRFIEGKLDATGLKFGIIVGRFNSFIGERLLEGALDALVRNGADEATIDVARVPGAFEIPLTAKKMAQTGSYDAIICLGAVIRGSTPHFDYVAAEVSKGVAHVSLETGVPVSFGVLTTDTIEQAVERAGTKAGNKGFDAAMTAIETVRVFREFR.

Residues phenylalanine 23, 57–59 (AFE), and 81–83 (AVI) contribute to the 5-amino-6-(D-ribitylamino)uracil site. 86 to 87 (ST) serves as a coordination point for (2S)-2-hydroxy-3-oxobutyl phosphate. Histidine 89 serves as the catalytic Proton donor. Residue phenylalanine 114 coordinates 5-amino-6-(D-ribitylamino)uracil. Arginine 128 contributes to the (2S)-2-hydroxy-3-oxobutyl phosphate binding site.

The protein belongs to the DMRL synthase family.

It carries out the reaction (2S)-2-hydroxy-3-oxobutyl phosphate + 5-amino-6-(D-ribitylamino)uracil = 6,7-dimethyl-8-(1-D-ribityl)lumazine + phosphate + 2 H2O + H(+). Its pathway is cofactor biosynthesis; riboflavin biosynthesis; riboflavin from 2-hydroxy-3-oxobutyl phosphate and 5-amino-6-(D-ribitylamino)uracil: step 1/2. Its function is as follows. Catalyzes the formation of 6,7-dimethyl-8-ribityllumazine by condensation of 5-amino-6-(D-ribitylamino)uracil with 3,4-dihydroxy-2-butanone 4-phosphate. This is the penultimate step in the biosynthesis of riboflavin. In Geobacter metallireducens (strain ATCC 53774 / DSM 7210 / GS-15), this protein is 6,7-dimethyl-8-ribityllumazine synthase.